The chain runs to 925 residues: Aspulvinone E synthetase melA (925 aa).

The tract at residues 11 to 434 (ETAAARNGDG…GGRAKETIII (424 aa)) is adenylation (A) domain. A Carrier domain is found at 564 to 644 (SPKNDFEKGL…ELAAALDNLY (81 aa)). Ser-601 is subject to O-(pantetheine 4'-phosphoryl)serine. Positions 663–923 (PLWLVHPGAG…KILRSALAER (261 aa)) are thioesterase (TE) domain.

The protein belongs to the NRP synthetase family.

It is found in the cytoplasm. It carries out the reaction 2 3-(4-hydroxyphenyl)pyruvate + AH2 + 2 ATP + O2 = aspulvinone E + A + 2 AMP + CO2 + 2 diphosphate + H2O + H(+). Its function is as follows. Nonribosomal peptide synthase; part of the gene cluster that mediates the biosynthesis of Asp-melanin, a pigment that confers resistance against UV light and hampers phagocytosis by soil amoeba. The nonribosomal peptide synthase melA converts 4-hydroxyphenylpyruvate (4-HPPA) to aspulvinone E. The tyrosinase tyrP then performs hydroxylations of both aromatic moieties of aspulvinone E. The product of tyrP is highly unstable, and, due to the high reactivity of methides and ortho-diquinones, the polymeric Asp-melanin forms spontaneously. The sequence is that of Aspulvinone E synthetase melA from Aspergillus terreus (strain NIH 2624 / FGSC A1156).